The following is a 384-amino-acid chain: Sensor protein VanS (384 aa).

2 helical membrane-spanning segments follow: residues 21-41 and 76-96; these read MYIVAIVVVAIVFVLYIRSMI and IDIFIYVAIVISILILCRVML. The region spanning 161-376 is the Histidine kinase domain; the sequence is YLAHDIKTPL…TFRVELPAMP (216 aa). A Phosphohistidine; by autocatalysis modification is found at His-164. The interval 221-384 is involved in low-affinity ATP-binding. Exhibits higher affinity for ATP than GTP; it reads QTITLTKTHI…MPDLVDKRRS (164 aa).

In terms of processing, autophosphorylated.

The protein localises to the membrane. The catalysed reaction is ATP + protein L-histidine = ADP + protein N-phospho-L-histidine.. Its activity is regulated as follows. Phosphorylation of VanR inhibited by EDTA. In terms of biological role, member of the two-component regulatory system VanS/VanR. Functions as a sensor protein kinase which is autophosphorylated at a histidine residue in response to environmental stimuli, such as glycopeptide antibiotics. VanS transfers its phosphate group to transcriptional regulatory protein VanR, thereby modulating expression of target genes. Binds directly to, and autophosphorylation activity is enhanced by, the glycopeptides vancomycin and teicoplanin, in vitro. However it has also been reported that autophosphorylation, phosphate transfer to VanR and dephosphorylation of phospho-VanR are all unaffected by the presence of vancomycin, in vitro. In the absence of vancomycin, negatively regulates VanR-mediated activation of vanS, vanH, vanA and vanX, probably as a result of dephosphorylating phospho-VanR. May inhibit promoter-specific DNA binding by VanR. Involved in conferring vancomycin resistance. The polypeptide is Sensor protein VanS (Enterococcus faecium (Streptococcus faecium)).